The sequence spans 493 residues: Glutamyl-tRNA(Gln) amidotransferase subunit A (493 aa).

Residues lysine 78 and serine 158 each act as charge relay system in the active site. Serine 182 acts as the Acyl-ester intermediate in catalysis.

It belongs to the amidase family. GatA subfamily. Heterotrimer of A, B and C subunits.

It carries out the reaction L-glutamyl-tRNA(Gln) + L-glutamine + ATP + H2O = L-glutaminyl-tRNA(Gln) + L-glutamate + ADP + phosphate + H(+). Its function is as follows. Allows the formation of correctly charged Gln-tRNA(Gln) through the transamidation of misacylated Glu-tRNA(Gln) in organisms which lack glutaminyl-tRNA synthetase. The reaction takes place in the presence of glutamine and ATP through an activated gamma-phospho-Glu-tRNA(Gln). This chain is Glutamyl-tRNA(Gln) amidotransferase subunit A, found in Methylorubrum populi (strain ATCC BAA-705 / NCIMB 13946 / BJ001) (Methylobacterium populi).